Reading from the N-terminus, the 246-residue chain is Small ribosomal subunit protein uS2 (246 aa).

This sequence belongs to the universal ribosomal protein uS2 family.

The sequence is that of Small ribosomal subunit protein uS2 from Lachnoclostridium phytofermentans (strain ATCC 700394 / DSM 18823 / ISDg) (Clostridium phytofermentans).